Reading from the N-terminus, the 346-residue chain is Holliday junction branch migration complex subunit RuvB (346 aa).

The large ATPase domain (RuvB-L) stretch occupies residues 4–184 (TDRLIAPTAK…FGIVQRLEFY (181 aa)). Residues R24, G65, K68, T69, T70, 131-133 (EDF), R174, Y184, and R221 each bind ATP. T69 is a binding site for Mg(2+). Positions 185–255 (NVKDLTHIVA…LADKALNMLN (71 aa)) are small ATPAse domain (RuvB-S). Residues 258-346 (ERGFDHMDRR…QESQGGEGIA (89 aa)) form a head domain (RuvB-H) region. DNA-binding residues include R294, R313, and R318.

The protein belongs to the RuvB family. In terms of assembly, homohexamer. Forms an RuvA(8)-RuvB(12)-Holliday junction (HJ) complex. HJ DNA is sandwiched between 2 RuvA tetramers; dsDNA enters through RuvA and exits via RuvB. An RuvB hexamer assembles on each DNA strand where it exits the tetramer. Each RuvB hexamer is contacted by two RuvA subunits (via domain III) on 2 adjacent RuvB subunits; this complex drives branch migration. In the full resolvosome a probable DNA-RuvA(4)-RuvB(12)-RuvC(2) complex forms which resolves the HJ.

It localises to the cytoplasm. The enzyme catalyses ATP + H2O = ADP + phosphate + H(+). In terms of biological role, the RuvA-RuvB-RuvC complex processes Holliday junction (HJ) DNA during genetic recombination and DNA repair, while the RuvA-RuvB complex plays an important role in the rescue of blocked DNA replication forks via replication fork reversal (RFR). RuvA specifically binds to HJ cruciform DNA, conferring on it an open structure. The RuvB hexamer acts as an ATP-dependent pump, pulling dsDNA into and through the RuvAB complex. RuvB forms 2 homohexamers on either side of HJ DNA bound by 1 or 2 RuvA tetramers; 4 subunits per hexamer contact DNA at a time. Coordinated motions by a converter formed by DNA-disengaged RuvB subunits stimulates ATP hydrolysis and nucleotide exchange. Immobilization of the converter enables RuvB to convert the ATP-contained energy into a lever motion, pulling 2 nucleotides of DNA out of the RuvA tetramer per ATP hydrolyzed, thus driving DNA branch migration. The RuvB motors rotate together with the DNA substrate, which together with the progressing nucleotide cycle form the mechanistic basis for DNA recombination by continuous HJ branch migration. Branch migration allows RuvC to scan DNA until it finds its consensus sequence, where it cleaves and resolves cruciform DNA. This chain is Holliday junction branch migration complex subunit RuvB, found in Cellvibrio japonicus (strain Ueda107) (Pseudomonas fluorescens subsp. cellulosa).